Here is a 99-residue protein sequence, read N- to C-terminus: uncharacterized protein (99 aa).

This is an uncharacterized protein from Salmonella typhimurium (strain LT2 / SGSC1412 / ATCC 700720).